Here is a 122-residue protein sequence, read N- to C-terminus: Large ribosomal subunit protein uL18 (122 aa).

This sequence belongs to the universal ribosomal protein uL18 family. In terms of assembly, part of the 50S ribosomal subunit; part of the 5S rRNA/L5/L18/L25 subcomplex. Contacts the 5S and 23S rRNAs.

Functionally, this is one of the proteins that bind and probably mediate the attachment of the 5S RNA into the large ribosomal subunit, where it forms part of the central protuberance. The polypeptide is Large ribosomal subunit protein uL18 (Fervidobacterium nodosum (strain ATCC 35602 / DSM 5306 / Rt17-B1)).